Consider the following 288-residue polypeptide: ATP synthase gamma chain (288 aa).

This sequence belongs to the ATPase gamma chain family. F-type ATPases have 2 components, CF(1) - the catalytic core - and CF(0) - the membrane proton channel. CF(1) has five subunits: alpha(3), beta(3), gamma(1), delta(1), epsilon(1). CF(0) has three main subunits: a, b and c.

Its subcellular location is the cell inner membrane. Its function is as follows. Produces ATP from ADP in the presence of a proton gradient across the membrane. The gamma chain is believed to be important in regulating ATPase activity and the flow of protons through the CF(0) complex. In Vibrio vulnificus (strain CMCP6), this protein is ATP synthase gamma chain.